A 176-amino-acid polypeptide reads, in one-letter code: MAICRILGIDPGSRITGYGIIDVRGTAIDYVDSGCIRLATQLMPQRLMTIHQGIFELVQQYHPQQFAIEAIFVHKNPNSALKLGQARGVAICAAVLSGLSINEYAAKSIKQAVVGKGGADKIQVQHMVKILLNRQGAIQSDAADALAVAITHAHHLQTLACQRPRQTDYWVNGNAS.

Residues D10, E69, and D141 contribute to the active site. Mg(2+) is bound by residues D10, E69, and D141.

It belongs to the RuvC family. As to quaternary structure, homodimer which binds Holliday junction (HJ) DNA. The HJ becomes 2-fold symmetrical on binding to RuvC with unstacked arms; it has a different conformation from HJ DNA in complex with RuvA. In the full resolvosome a probable DNA-RuvA(4)-RuvB(12)-RuvC(2) complex forms which resolves the HJ. The cofactor is Mg(2+).

Its subcellular location is the cytoplasm. It carries out the reaction Endonucleolytic cleavage at a junction such as a reciprocal single-stranded crossover between two homologous DNA duplexes (Holliday junction).. The RuvA-RuvB-RuvC complex processes Holliday junction (HJ) DNA during genetic recombination and DNA repair. Endonuclease that resolves HJ intermediates. Cleaves cruciform DNA by making single-stranded nicks across the HJ at symmetrical positions within the homologous arms, yielding a 5'-phosphate and a 3'-hydroxyl group; requires a central core of homology in the junction. The consensus cleavage sequence is 5'-(A/T)TT(C/G)-3'. Cleavage occurs on the 3'-side of the TT dinucleotide at the point of strand exchange. HJ branch migration catalyzed by RuvA-RuvB allows RuvC to scan DNA until it finds its consensus sequence, where it cleaves and resolves the cruciform DNA. The sequence is that of Crossover junction endodeoxyribonuclease RuvC from Dichelobacter nodosus (strain VCS1703A).